The sequence spans 76 residues: Omega-scoloptoxin(15)-Ssd3c (76 aa).

A signal peptide spans 1–23 (MEKKIIFLVVLVALLALPEFISS).

This sequence belongs to the scoloptoxin-15 family. In terms of processing, contains 2 disulfide bonds. In terms of tissue distribution, expressed by the venom gland.

Its subcellular location is the secreted. In terms of biological role, voltage-gated calcium channel inhibitor (Cav) (8.6% block at 10 nM), when tested on DRG neurons. This Scolopendra dehaani (Thai centipede) protein is Omega-scoloptoxin(15)-Ssd3c.